A 76-amino-acid polypeptide reads, in one-letter code: uncharacterized protein (76 aa).

Residues 20-42 traverse the membrane as a helical segment; it reads GIVWGPKLAPWGITLGLGAFYFF.

Its subcellular location is the membrane. This is an uncharacterized protein from Dictyostelium discoideum (Social amoeba).